We begin with the raw amino-acid sequence, 321 residues long: Glucokinase (321 aa).

8–13 (GDVGGT) contacts ATP.

The protein belongs to the bacterial glucokinase family.

It localises to the cytoplasm. The enzyme catalyses D-glucose + ATP = D-glucose 6-phosphate + ADP + H(+). The sequence is that of Glucokinase from Tolumonas auensis (strain DSM 9187 / NBRC 110442 / TA 4).